A 605-amino-acid chain; its full sequence is Ras guanine nucleotide exchange factor A (605 aa).

The LisH domain maps to 67–99; it reads DKTAIIQLILQHLSTKGLKQTKQTLEKEARTTT. The 123-residue stretch at 198–320 folds into the N-terminal Ras-GEF domain; the sequence is DDEVVKFASL…SLTKMVEKLS (123 aa). The Ras-GEF domain maps to 353-597; it reads DEEEIARQLT…YRESLKREPK (245 aa).

Component of the Sca1 complex composed of at least gefA, gefH, scaA, phr, and the protein phosphatase 2A subunits pppA and pho2B. Interacts directly with gefH.

The protein localises to the cell membrane. In terms of biological role, ras-bound GDP/GTP exchange factor required for normal activation of adenylyl cyclase. Component of the Sca1 complex, a regulator of cell motility, chemotaxis and signal relay. The Sca1 complex is recruited to the plasma membrane in a chemoattractant- and F-actin-dependent manner and is enriched at the leading edge of chemotaxing cells where it regulates F-actin dynamics and signal relay by controlling the activation of rasC and the downstream target of rapamycin complex 2 (TORC2)-Akt/protein kinase B (PKB) pathway. In Dictyostelium discoideum (Social amoeba), this protein is Ras guanine nucleotide exchange factor A (gefA).